Here is a 222-residue protein sequence, read N- to C-terminus: UPF0502 protein PBPRB0676 (222 aa).

The protein belongs to the UPF0502 family.

In Photobacterium profundum (strain SS9), this protein is UPF0502 protein PBPRB0676.